The sequence spans 637 residues: Tumor protein p73 (637 aa).

Residues 1 to 46 (MAQSTTTSPDGGTTFEHLWSSLEPDSTYFDLPQSSRGNNEVVGGTD) are transactivation. Thr27 bears the Phosphothreonine mark. Tyr28 carries the phosphotyrosine; by SRC and HCK modification. A disordered region spans residues 78–104 (RAASASPYTPEHAASVPTHSPYAQPSS). Over residues 94-104 (PTHSPYAQPSS) the composition is skewed to polar residues. Tyr99 carries the post-translational modification Phosphotyrosine. Residues 131-310 (FQQSSTAKSA…DRKADEDHYR (180 aa)) are DNA-binding. The Zn(2+) site is built by Cys194, His197, Cys258, and Cys262. The span at 301–311 (DRKADEDHYRE) shows a compositional bias: basic and acidic residues. Residues 301–351 (DRKADEDHYREQQALNESSAKNGAASKRAFKQSPPAVPALGPGVKKRRHGD) form a disordered region. The segment at 345 to 380 (KKRRHGDEDTYYLQVRGRENFEILMKLKESLELMEL) is interaction with HIPK2. The oligomerization stretch occupies residues 345 to 386 (KKRRHGDEDTYYLQVRGRENFEILMKLKESLELMELVPQPLV). The short motif at 483–487 (PPPPY) is the PPxY motif element. One can recognise an SAM domain in the interval 485–551 (PPYHADPSLV…WRGLQDLKQG (67 aa)). Lys628 participates in a covalent cross-link: Glycyl lysine isopeptide (Lys-Gly) (interchain with G-Cter in SUMO); in isoform Alpha. Lys628 participates in a covalent cross-link: Glycyl lysine isopeptide (Lys-Gly) (interchain with G-Cter in SUMO2).

It belongs to the p53 family. As to quaternary structure, found in a complex with p53/TP53 and CABLES1. The C-terminal oligomerization domain binds to the ABL1 tyrosine kinase SH3 domain. Interacts with HECW2. Isoforms Alpha and Beta interact with HIPK2. Isoform Alpha interacts with RANBP9. Interacts with WWOX. Isoform Beta interacts homotypically and with p53, whereas isoform Alpha does not. Interacts (via SAM domain) with FBXO45 (via B30.2/SPRY domain). Interacts with YAP1 (phosphorylated form). Interacts with HCK (via SH3 domain); this inhibits TP73 activity and degradation. Zn(2+) is required as a cofactor. In terms of processing, isoform Alpha (but not isoform Beta) is sumoylated on Lys-628, which potentiates proteasomal degradation but does not affect transcriptional activity. Post-translationally, polyubiquitinated by RCHY1/PIRH2; leading to its degradation by the proteasome.

It is found in the nucleus. Its subcellular location is the cytoplasm. In terms of biological role, participates in the apoptotic response to DNA damage. May be a tumor suppressor protein. Is an activator of FOXJ1 expression, essential for the positive regulation of lung ciliated cell differentiation. In Chlorocebus aethiops (Green monkey), this protein is Tumor protein p73 (TP73).